Here is a 70-residue protein sequence, read N- to C-terminus: Small ribosomal subunit protein bS18c (70 aa).

It belongs to the bacterial ribosomal protein bS18 family. Part of the 30S ribosomal subunit.

The protein localises to the plastid. It localises to the chloroplast. This chain is Small ribosomal subunit protein bS18c, found in Gracilaria tenuistipitata var. liui (Red alga).